A 298-amino-acid chain; its full sequence is Putative insertion sequence ATP-binding protein y4iQ/y4nD/y4sD (298 aa).

114 to 121 (GPPGGGKS) serves as a coordination point for ATP. Residues 276–298 (RQSEHDETLASDNQHDTFMPTAT) form a disordered region.

The protein belongs to the IS21/IS1162 putative ATP-binding protein family.

The protein is Putative insertion sequence ATP-binding protein y4iQ/y4nD/y4sD of Sinorhizobium fredii (strain NBRC 101917 / NGR234).